Consider the following 119-residue polypeptide: Large ribosomal subunit protein eL31y (119 aa).

The protein belongs to the eukaryotic ribosomal protein eL31 family.

The sequence is that of Large ribosomal subunit protein eL31y (RPL31B) from Arabidopsis thaliana (Mouse-ear cress).